The primary structure comprises 201 residues: Large ribosomal subunit protein bL25 (201 aa).

It belongs to the bacterial ribosomal protein bL25 family. CTC subfamily. In terms of assembly, part of the 50S ribosomal subunit; part of the 5S rRNA/L5/L18/L25 subcomplex. Contacts the 5S rRNA. Binds to the 5S rRNA independently of L5 and L18.

This is one of the proteins that binds to the 5S RNA in the ribosome where it forms part of the central protuberance. This Burkholderia cenocepacia (strain HI2424) protein is Large ribosomal subunit protein bL25.